The following is a 3225-amino-acid chain: Intermembrane lipid transfer protein VPS13 (3225 aa).

Positions 1–1390 are involved in phospholipid binding; sequence MLEGLVAGLL…VFAADVEQHT (1390 aa). Residues 2-115 enclose the Chorein N-terminal domain; it reads LEGLVAGLLN…RHRLKMEKLD (114 aa). Disordered stretches follow at residues 1568 to 1610 and 1768 to 1799; these read PEAP…QQLV and AGLK…SHSG. A compositionally biased stretch (low complexity) spans 1590–1610; sequence VRVGSSGRHSESSAGSGQQLV. Residues 1777–1799 show a composition bias toward polar residues; it reads GKGTSTLATRTRHASQSAASHSG. The SHR-BD domain maps to 2290 to 2570; the sequence is FKVTVYSPYV…PYAWDFPAAK (281 aa).

This sequence belongs to the VPS13 family.

Its subcellular location is the membrane. Mediates the transfer of lipids between membranes at organelle contact sites. Binds phospholipids, including phosphatidylcholine (PC), phosphatidylethanolamine (PE), phosphatidic acid (PA), and phosphatidylserine (PS). May play a role in mitochondrial lipid homeostasis, Golgi vesicle transport, reticulophagy, actin cytoskeleton organization and formation of the prospore membrane. This is Intermembrane lipid transfer protein VPS13 from Chaetomium thermophilum (strain DSM 1495 / CBS 144.50 / IMI 039719) (Thermochaetoides thermophila).